Consider the following 820-residue polypeptide: MGRRGRGGGGGMGGGINRRYLSQVMDTCGKDLSTAEDIVDDLRSRYGNFARLTRQVLLLNVRQVLNVRNNKRVKDEDEDDNIGDEEGSASQRKKQRRVDEKEEKLQRAEQSHLRKRNMERSVSSSPSSSSSSEDSGDVSTSEDAVYGEKLSPPRFDLINDSLRDNYAKLNSSSKKPIGSPAEKNVEVETVSNKGRSKLATMGARKEAKVSLSLSGATGNGDLEVEGTKGPTFKDFGGIKKILDELEMNVLFPILNPEPFKKIGVKPPSGILFHGPPGCGKTKLANAIANEAGVPFYKISATEVISGVSGASEENIRELFSKAYRTAPSIVFIDEIDAIGSKRENQQREMEKRIVTQLLTCMDGPGNKGDKNAPDSSAGFVLVIGATNRPDALDPALRRSGRFETEIALTAPDEDARAEILSVVAQKLRLEGPFDKKRIARLTPGFVGADLESVAYLAGRKAIKRILDSRKSEQSGDGEDDKSWLRMPWPEEELEKLFVKMSDFEEAVNLVQASLTREGFSIVPDVKWDDVGGLDHLRLQFNRYIVRPIKKPDIYKAFGVDLETGFLLYGPPGCGKTLIAKAAANEAGANFMHIKGAELLNKYVGESELAIRTLFQRARTCAPCVIFFDEVDALTTSRGKEGAWVVERLLNQFLVELDGGERRNVYVIGATNRPDVVDPAFLRPGRFGNLLYVPLPNADERASILKAIARKKPIDPSVDLDGIAKNNCEGFSGADLAHLVQKATFQAVEEMIGSSESSEDDVTDITQCTIKTRHFEQALSLVSPSVNKQQRRHYDALSTKLQESVGRNTEQVTIGPSFTLE.

2 disordered regions span residues 72–157 (RVKD…RFDL) and 169–188 (LNSSSKKPIGSPAEKNVEVE). Positions 76–87 (EDEDDNIGDEEG) are enriched in acidic residues. A coiled-coil region spans residues 85–122 (EEGSASQRKKQRRVDEKEEKLQRAEQSHLRKRNMERSV). Residues 97-119 (RVDEKEEKLQRAEQSHLRKRNME) are compositionally biased toward basic and acidic residues. The segment covering 121–142 (SVSSSPSSSSSSEDSGDVSTSE) has biased composition (low complexity). ATP is bound by residues 274-281 (GPPGCGKT) and 569-576 (GPPGCGKT).

Belongs to the AAA ATPase family.

The protein localises to the nucleus. It localises to the cytoplasm. The protein resides in the cytoskeleton. It is found in the phragmoplast. Probably functions in cell division and growth processes. Interacts with certain SNAREs as part of specialized membrane fusion events where vesicles from the same organelle fuse (homotypic fusion). In Arabidopsis thaliana (Mouse-ear cress), this protein is Cell division control protein 48 homolog C (CDC48C).